We begin with the raw amino-acid sequence, 83 residues long: Cytochrome b559 subunit alpha (83 aa).

A helical membrane pass occupies residues 21 to 35 (VIHSITIPSLFIAGW). His23 contributes to the heme binding site.

This sequence belongs to the PsbE/PsbF family. In terms of assembly, heterodimer of an alpha subunit and a beta subunit. PSII is composed of 1 copy each of membrane proteins PsbA, PsbB, PsbC, PsbD, PsbE, PsbF, PsbH, PsbI, PsbJ, PsbK, PsbL, PsbM, PsbT, PsbX, PsbY, PsbZ, Psb30/Ycf12, at least 3 peripheral proteins of the oxygen-evolving complex and a large number of cofactors. It forms dimeric complexes. Heme b is required as a cofactor.

The protein localises to the plastid. It localises to the chloroplast thylakoid membrane. Functionally, this b-type cytochrome is tightly associated with the reaction center of photosystem II (PSII). PSII is a light-driven water:plastoquinone oxidoreductase that uses light energy to abstract electrons from H(2)O, generating O(2) and a proton gradient subsequently used for ATP formation. It consists of a core antenna complex that captures photons, and an electron transfer chain that converts photonic excitation into a charge separation. This Panax ginseng (Korean ginseng) protein is Cytochrome b559 subunit alpha.